A 203-amino-acid polypeptide reads, in one-letter code: Hypoxanthine-guanine phosphoribosyltransferase (203 aa).

The diphosphate site is built by Lys-66 and Gly-67. Residues Glu-122 and Asp-123 each contribute to the Mg(2+) site. The Proton acceptor role is filled by Asp-126. GMP-binding positions include Lys-154, 175 to 176, and Asp-182; that span reads FV. Arg-188 contacts diphosphate.

The protein belongs to the purine/pyrimidine phosphoribosyltransferase family. Mg(2+) serves as cofactor.

It localises to the cytoplasm. The catalysed reaction is IMP + diphosphate = hypoxanthine + 5-phospho-alpha-D-ribose 1-diphosphate. It catalyses the reaction GMP + diphosphate = guanine + 5-phospho-alpha-D-ribose 1-diphosphate. The protein operates within purine metabolism; IMP biosynthesis via salvage pathway; IMP from hypoxanthine: step 1/1. It functions in the pathway purine metabolism; GMP biosynthesis via salvage pathway; GMP from guanine: step 1/1. In terms of biological role, purine salvage pathway enzyme that catalyzes the transfer of the ribosyl-5-phosphate group from 5-phospho-alpha-D-ribose 1-diphosphate (PRPP) to the N9 position of the 6-oxopurines hypoxanthine and guanine to form the corresponding ribonucleotides IMP (inosine 5'-monophosphate) and GMP (guanosine 5'-monophosphate), with the release of PPi. This is Hypoxanthine-guanine phosphoribosyltransferase (hpt) from Mycobacterium avium.